The following is a 491-amino-acid chain: UDP-N-acetylmuramate--L-alanine ligase (491 aa).

Position 126-132 (126-132 (GTHGKTT)) interacts with ATP.

It belongs to the MurCDEF family.

Its subcellular location is the cytoplasm. It carries out the reaction UDP-N-acetyl-alpha-D-muramate + L-alanine + ATP = UDP-N-acetyl-alpha-D-muramoyl-L-alanine + ADP + phosphate + H(+). It participates in cell wall biogenesis; peptidoglycan biosynthesis. Functionally, cell wall formation. The chain is UDP-N-acetylmuramate--L-alanine ligase from Yersinia pestis (strain Pestoides F).